We begin with the raw amino-acid sequence, 8525 residues long: Nebulin (8525 aa).

The tract at residues 34–70 is disordered; that stretch reads TTTTRTSDYEQSETSKPALAQPALAQPASAKPVERRK. Over residues 48–64 the composition is skewed to low complexity; sequence SKPALAQPALAQPASAK. Nebulin repeat units follow at residues 83–110, 112–146, 156–181, 182–216, 217–251, 252–286, 296–321, 323–357, 362–396, 403–431, 433–467, 501–535, 536–570, 572–606, 610–644, 680–714, 748–782, 783–817, 819–853, 857–891, 892–918, 923–957, 968–986, 992–1026, 1027–1061, 1063–1097, 1101–1135, 1136–1166, 1167–1201, 1212–1230, 1236–1270, 1271–1305, 1307–1341, 1345–1379, 1380–1407, 1411–1445, 1456–1474, 1480–1514, 1515–1549, 1551–1585, 1589–1623, 1624–1654, 1655–1689, 1697–1725, 1730–1758, 1759–1793, 1795–1829, 1833–1867, 1868–1894, 1899–1933, 1949–1962, 1968–2002, 2003–2037, 2039–2073, 2077–2111, 2112–2138, 2143–2177, 2188–2206, 2212–2246, 2247–2281, 2283–2317, 2321–2355, 2356–2382, 2387–2421, 2436–2449, 2455–2489, 2490–2524, 2526–2560, 2564–2598, 2599–2625, 2630–2664, 2679–2692, 2698–2732, 2733–2767, 2769–2803, 2807–2841, 2842–2868, 2873–2907, 2917–2935, 2941–2975, 2976–3010, 3012–3046, 3050–3084, 3085–3111, 3116–3150, 3158–3178, 3184–3218, 3219–3253, 3255–3289, 3293–3327, 3328–3354, 3359–3393, 3401–3421, 3427–3461, 3462–3496, 3498–3532, 3536–3570, 3571–3597, 3602–3636, 3643–3664, 3670–3704, 3705–3739, 3741–3775, 3779–3813, 3814–3840, 3845–3879, 3889–3907, 3913–3947, 3948–3982, 3984–4018, 4022–4056, 4057–4083, 4088–4122, 4132–4149, 4156–4190, 4191–4225, 4227–4261, 4265–4299, 4300–4326, 4331–4365, 4375–4392, 4399–4433, 4434–4468, 4470–4504, 4508–4542, 4543–4569, 4574–4608, 4618–4635, 4642–4676, 4677–4711, 4713–4747, 4751–4785, 4786–4812, 4817–4851, 4861–4878, 4885–4919, 4920–4954, 4956–4990, 4994–5028, 5029–5055, 5060–5094, 5104–5121, 5128–5162, 5163–5197, 5199–5233, 5237–5271, 5272–5298, 5303–5337, 5347–5364, 5371–5405, 5406–5440, 5442–5476, 5480–5514, 5515–5541, 5546–5580, 5588–5607, 5614–5648, 5649–5683, 5690–5718, 5722–5756, 5757–5783, 5788–5822, 5829–5853, 5856–5890, 5893–5924, 5926–5960, 5964–5998, 5999–6025, 6030–6064, 6071–6099, 6100–6134, 6135–6169, 6171–6205, 6209–6243, 6244–6274, 6275–6309, 6316–6344, 6345–6379, 6380–6414, 6416–6450, 6458–6488, 6489–6515, 6532–6554, 6561–6589, 6590–6624, 6626–6660, 6661–6695, 6697–6731, 6732–6766, 6767–6801, 6808–6836, 6837–6871, 6872–6906, 6907–6941, 6942–6976, 6977–7011, 7012–7046, 7053–7081, 7082–7110, 7125–7151, 7152–7186, 7188–7222, 7223–7257, 7258–7292, 7297–7327, 7328–7362, 7365–7399, 7402–7433, 7436–7470, 7479–7505, 7514–7542, 7543–7577, 7578–7612, 7619–7647, 7650–7684, 7687–7721, 7731–7759, 7760–7794, 7795–7829, 7830–7864, 7867–7888, 7892–7921, 7930–7957, 7961–7988, 7992–8013, 8016–8045, 8054–8075, 8078–8112, 8116–8143, 8147–8168, 8171–8205, 8209–8232, 8233–8267, 8269–8303, and 8304–8330; these read TPYI…KTKG, PYAS…VAKT, DIEH…DTKD, KYLL…ADKS, LFYP…EQQA, QFTP…NKIK, EVAN…NMKD, IYFM…KNKG, NVLP…KTKA, ETPK…KDIL, HYVG…EDRG, KFTQ…SEKF, KCHI…KSKA, KFDI…KNKG, GVLS…KTKA, HYVG…EDKG, KFTA…GEKF, KFDI…KSKG, GALS…KSKT, IYTA…VDYK, SYSY…SWMK, EMEK…KYRQ, KFTS…EIIH, KYNL…DLSK, GYDL…KAKG, GFQS…KTKS, KYNT…HSLH, HYTY…NWMK, DVEK…KYRQ, KFTS…DVKH, KYTM…DLIA, GNNV…KSKG, GFRS…NTKT, SYHT…NYKQ, HYTY…SFLK, EVEK…KYRQ, KFTS…KLKH, KYTI…KTIA, GFLS…ASKT, KYHT…QSYH, HYTL…NWMK, ESLE…KLKF, DTME…KDKT, TIHV…EEKK, GYDL…QAKG, GFRS…KSKT, SFHT…ANYR, TYNM…DFMK, KKAM…KYRQ, KYST…ADKT, KVHI…ESKK, GYDL…KGKG, SYHT…TNYK, KYIL…EWYK, QFKK…KDKT, KIHV…EALK, GYDL…KQLG, GFRS…KWKT, KFSS…VDYK, QWTC…WLRG, KRAS…KYRQ, KFTS…KDKT, QIHI…ELKR, GARN…KWKT, QWTC…WLKG, KRAT…VYRQ, KFSS…KDKT, TVHI…EAKR, GYDM…KQLG, GARA…KWKT, QWTC…WMRG, DVEK…IYRQ, QIHI…EAKK, EWTC…WLRG, SMDV…IYRQ, QVHI…EAKK, GARA…KYKT, RYSS…VDYK, EWIC…WMKG, DSLE…IYRQ, KFTS…NDKK, TIHV…ESKK, KFSS…IDYK, KFTC…ADKT, SIHV…ESKM, DYDL…KQKG, GAQS…KWKT, KFSS…IDYR, EMNR…RLYR, SFTS…KDKS, NITI…DAKQ, GYDI…KQLG, GFRT…KSKG, IHNT…IDYR, EVMR…RLYR, KFTS…KEKA, NVNV…DVKM, GYDL…KQKG, GCRS…DHKA, KISI…VDYR, HWSC…WLRG, NITI…DTKQ, RWSC…WLRG, SPEV…SVYR, KYTS…KDKT, SIHI…EMKA, DAIP…KQKG, GTLT…KWKA, KIQS…MDYR, DSVS…TKIE, NFTP…ATKS, TLTE…RQKA, GYIL…KQKG, GVPT…KTKA, KINI…IDYR, QWMC…WLRG, DSVD…ENYP, NFRS…KAKG, KYTF…GTKA, GYTL…KQKG, AGKV…DTKA, NVHI…HYFH, QWTS…WLKG, DTPQ…ENLQ, NYNL…QIKD, KYTT…RVKA, SYIL…KFKA, VDDD…KNKM, KIHI…IDYR, HVRK…WLKG, DTPE…KTRN, DYKL…HSVR, KVAP…TLPT, GYRL…HTKA, GYTL…KLKD, KIHT…KMQG, HMIS…VLKG, DTPD…KMRD, KYKV…KQKS, IFTS…KERP, HHHA…KMKD, KYTP…KTKG, KYHT…SQLG, IWRS…WLKG, DTPD…RTKS, DFKY…YKSS, PDML…KSKD, KFTS…KAKP, GYTT…RNKS, NCTI…ANKA, HWKW…FLKG, VTDD…KERG, TCHA…KHLA, SYTT…KEKG, NYSI…DAKE, HYTT…KEGS, PDIE…KEKG, DSQL…KLHK, PVTD…KSKG, HYHT…KERG, ETPT…ESIK, NLTG…ESIR, GLTE…LEVK, ETPD…MEKA, NFTS…KSMS, YYET…NSKG, KITV…PGTA, KTPE…KYKE, QGTP…KENL, TPEI…KGIP, TPEM…KGTP, TPEM…YKEN, KGIP…KENL, KGTP…KGTP, KATA…KATP, TPEM…ENMR, KATP…KQIQ, KAAY…KHKG, and CFTP…INYR. The interaction with SVIL stretch occupies residues 8313 to 8468; the sequence is ITERVKKNMQ…SIPSHPSTAG (156 aa). 2 disordered regions span residues 8385-8422 and 8439-8463; these read QAQR…LSTY and TTEL…IPSH. Positions 8405 to 8419 are enriched in basic and acidic residues; that stretch reads GEEKSEHSEAPDHHL. Positions 8444–8459 are enriched in low complexity; it reads QQRSSSVATQQTTVSS. The 60-residue stretch at 8466-8525 folds into the SH3 domain; the sequence is TAGKIFRAMYDYMAADADEVSFKDGDAIINVQAIDEGWMYGTVQRTGRTGMLPANYVEAI.

In terms of assembly, monomer and homooligomer. Interacts with TTN/titin. Interacts with SVIL. Interacts (via nebulin repeats 160-164) with DES. As to expression, expressed in skeletal muscle (at protein level). Located in the thin filament of striated muscle.

The protein localises to the cytoplasm. The protein resides in the myofibril. Its subcellular location is the sarcomere. It is found in the cytoskeleton. Its function is as follows. This giant muscle protein may be involved in maintaining the structural integrity of sarcomeres and the membrane system associated with the myofibrils. Binds and stabilize F-actin. The protein is Nebulin (NEB) of Homo sapiens (Human).